The following is a 277-amino-acid chain: Prohibitin-3, mitochondrial (277 aa).

The residue at position 2 (Gly-2) is an N-acetylglycine. Residues 2–6 (GSQQA) are Mitochondrial matrix-facing. Residues 7–28 (AVSFLSNLAKAAFGLGTAATVL) form a helical; Signal-anchor for type II membrane protein membrane-spanning segment. At 29–277 (NTSLFTVDGG…GQSMLFALNR (249 aa)) the chain is on the mitochondrial intermembrane side.

Belongs to the prohibitin family. In terms of assembly, component of a prohibitin multimeric complex in mitochondrial membranes. In terms of tissue distribution, mostly expressed in proliferative tissues, including vasculature, shoot and root apical tissues. Expressed in roots, stems, leaves and flowers (at protein level).

The protein resides in the cell membrane. It is found in the mitochondrion inner membrane. Its subcellular location is the nucleus. It localises to the cytoplasm. Functionally, prohibitin probably acts as a holdase/unfoldase for the stabilization of newly synthesized mitochondrial proteins. Necessary for mitochondrial and cell metabolism and biogenesis. Required to regulate the ethylene-mediated signaling; involved in growth maintenance in the presence of ethylene. Functions in nitric oxide (NO)-mediated responses and in hydrogen peroxide-induced NO accumulation. The sequence is that of Prohibitin-3, mitochondrial (PHB3) from Arabidopsis thaliana (Mouse-ear cress).